Consider the following 186-residue polypeptide: HGPRTase-like protein 3 (186 aa).

The protein belongs to the purine/pyrimidine phosphoribosyltransferase family. Archaeal HPRT subfamily.

In terms of biological role, may catalyze a purine salvage reaction, the substrate is unknown. The protein is HGPRTase-like protein 3 of Haloterrigena turkmenica (strain ATCC 51198 / DSM 5511 / JCM 9101 / NCIMB 13204 / VKM B-1734 / 4k) (Halococcus turkmenicus).